Here is a 530-residue protein sequence, read N- to C-terminus: Ubiquitin carboxyl-terminal hydrolase 17-like protein 12 (530 aa).

The 296-residue stretch at 80–375 (AGLQNMGNTC…QAYVLFYIQK (296 aa)) folds into the USP domain. Cys-89 acts as the Nucleophile in catalysis. His-334 functions as the Proton acceptor in the catalytic mechanism. Composition is skewed to basic and acidic residues over residues 382–392 (SESVSRGREPR) and 398–412 (DTDRRATQGELKRDH). 2 disordered regions span residues 382-412 (SESVSRGREPRALGAEDTDRRATQGELKRDH) and 477-530 (NHHP…LVCQ). Over residues 484–495 (SSLLKLSSTTPT) the composition is skewed to low complexity. Over residues 496–505 (HQESMNTGTL) the composition is skewed to polar residues. Positions 510 to 524 (GRARRSKGKNKHSKR) are enriched in basic residues.

Belongs to the peptidase C19 family. USP17 subfamily.

The protein resides in the nucleus. The protein localises to the endoplasmic reticulum. It catalyses the reaction Thiol-dependent hydrolysis of ester, thioester, amide, peptide and isopeptide bonds formed by the C-terminal Gly of ubiquitin (a 76-residue protein attached to proteins as an intracellular targeting signal).. In terms of biological role, deubiquitinating enzyme that removes conjugated ubiquitin from specific proteins to regulate different cellular processes that may include cell proliferation, progression through the cell cycle, apoptosis, cell migration, and the cellular response to viral infection. The chain is Ubiquitin carboxyl-terminal hydrolase 17-like protein 12 (USP17L12) from Homo sapiens (Human).